We begin with the raw amino-acid sequence, 243 residues long: 4-hydroxy-tetrahydrodipicolinate reductase (243 aa).

Residues 9-14 (GANGKM), 78-80 (GTS), and 104-107 (APNF) each bind NAD(+). H134 acts as the Proton donor/acceptor in catalysis. H135 is a (S)-2,3,4,5-tetrahydrodipicolinate binding site. Residue K138 is the Proton donor of the active site. 144 to 145 (GT) serves as a coordination point for (S)-2,3,4,5-tetrahydrodipicolinate.

It belongs to the DapB family.

Its subcellular location is the cytoplasm. The enzyme catalyses (S)-2,3,4,5-tetrahydrodipicolinate + NAD(+) + H2O = (2S,4S)-4-hydroxy-2,3,4,5-tetrahydrodipicolinate + NADH + H(+). It carries out the reaction (S)-2,3,4,5-tetrahydrodipicolinate + NADP(+) + H2O = (2S,4S)-4-hydroxy-2,3,4,5-tetrahydrodipicolinate + NADPH + H(+). Its pathway is amino-acid biosynthesis; L-lysine biosynthesis via DAP pathway; (S)-tetrahydrodipicolinate from L-aspartate: step 4/4. Its function is as follows. Catalyzes the conversion of 4-hydroxy-tetrahydrodipicolinate (HTPA) to tetrahydrodipicolinate. In Legionella pneumophila subsp. pneumophila (strain Philadelphia 1 / ATCC 33152 / DSM 7513), this protein is 4-hydroxy-tetrahydrodipicolinate reductase.